A 159-amino-acid chain; its full sequence is Troponin C, skeletal muscle (159 aa).

The residue at position 1 (threonine 1) is an N-acetylthreonine. EF-hand domains follow at residues 14–49, 50–85, 90–125, and 126–159; these read EMIA…LGQT, PTKE…QMKE, KSEE…SGEH, and VTDE…EGVQ. Aspartate 27, aspartate 29, aspartate 33, glutamate 38, aspartate 63, aspartate 65, serine 67, threonine 69, glutamate 74, aspartate 103, asparagine 105, aspartate 107, tyrosine 109, glutamate 114, aspartate 139, asparagine 141, aspartate 143, arginine 145, and glutamate 150 together coordinate Ca(2+).

It belongs to the troponin C family.

Troponin is the central regulatory protein of striated muscle contraction. Tn consists of three components: Tn-I which is the inhibitor of actomyosin ATPase, Tn-T which contains the binding site for tropomyosin and Tn-C. The binding of calcium to Tn-C abolishes the inhibitory action of Tn on actin filaments. The sequence is that of Troponin C, skeletal muscle (TNNC2) from Sus scrofa (Pig).